Reading from the N-terminus, the 391-residue chain is Methionine import ATP-binding protein MetN 2 (391 aa).

The region spanning 44–280 (VHVGKVFATP…PRHGATRALL (237 aa)) is the ABC transporter domain. Position 77 to 84 (77 to 84 (GRSGAGKS)) interacts with ATP.

This sequence belongs to the ABC transporter superfamily. Methionine importer (TC 3.A.1.24) family. In terms of assembly, the complex is composed of two ATP-binding proteins (MetN), two transmembrane proteins (MetI) and a solute-binding protein (MetQ).

It localises to the cell inner membrane. The catalysed reaction is L-methionine(out) + ATP + H2O = L-methionine(in) + ADP + phosphate + H(+). The enzyme catalyses D-methionine(out) + ATP + H2O = D-methionine(in) + ADP + phosphate + H(+). Its function is as follows. Part of the ABC transporter complex MetNIQ involved in methionine import. Responsible for energy coupling to the transport system. The sequence is that of Methionine import ATP-binding protein MetN 2 from Burkholderia ambifaria (strain ATCC BAA-244 / DSM 16087 / CCUG 44356 / LMG 19182 / AMMD) (Burkholderia cepacia (strain AMMD)).